The following is a 159-amino-acid chain: Bacterioferritin (159 aa).

The Ferritin-like diiron domain maps to 1–145 (MQGDPDVLRL…TQLELMDKLG (145 aa)). Residues Glu18 and Glu51 each coordinate Fe cation. Position 52 (Met52) interacts with heme b. Fe cation is bound by residues His54, Glu94, Glu127, and His130.

This sequence belongs to the bacterioferritin family. As to quaternary structure, homooligomer of 24 subunits, arranged as 12 dimers, that are packed together to form an approximately spherical molecule with a central cavity, in which large amounts of iron can be deposited. Heme b serves as cofactor.

It catalyses the reaction 4 Fe(2+) + O2 + 4 H(+) = 4 Fe(3+) + 2 H2O. It carries out the reaction Fe(2+)(in) = Fe(2+)(out). Functionally, iron-storage protein, whose ferroxidase center binds Fe(2+), oxidizes it using dioxygen to Fe(3+), and participates in the subsequent Fe(3+) oxide mineral core formation within the central cavity of the BFR protein shell. The chain is Bacterioferritin (bfr) from Mycobacterium bovis (strain ATCC BAA-935 / AF2122/97).